A 466-amino-acid chain; its full sequence is Putative D-3-phosphoglycerate dehydrogenase (466 aa).

The span at M1–L15 shows a compositional bias: basic and acidic residues. Residues M1 to N26 form a disordered region. The span at N16–N26 shows a compositional bias: polar residues. Phosphoserine is present on S87. Residues H205–I206 and D225 contribute to the NAD(+) site. A Phosphoserine modification is found at S258. Residues A282 to R284 and D308 each bind NAD(+). R284 is a catalytic residue. Residue E313 is part of the active site. Residue H344 is the Proton donor of the active site. An NAD(+)-binding site is contributed by H344–G347. The 71-residue stretch at R396–Y466 folds into the ACT domain.

Belongs to the D-isomer specific 2-hydroxyacid dehydrogenase family.

The catalysed reaction is (2R)-3-phosphoglycerate + NAD(+) = 3-phosphooxypyruvate + NADH + H(+). The enzyme catalyses (R)-2-hydroxyglutarate + NAD(+) = 2-oxoglutarate + NADH + H(+). The protein operates within amino-acid biosynthesis; L-serine biosynthesis; L-serine from 3-phospho-D-glycerate: step 1/3. Functionally, catalyzes the reversible oxidation of 3-phospho-D-glycerate to 3-phosphonooxypyruvate, the first step of the phosphorylated L-serine biosynthesis pathway. Also catalyzes the reversible oxidation of 2-hydroxyglutarate to 2-oxoglutarate. The protein is Putative D-3-phosphoglycerate dehydrogenase of Schizosaccharomyces pombe (strain 972 / ATCC 24843) (Fission yeast).